A 208-amino-acid chain; its full sequence is Urease accessory protein UreG (208 aa).

Position 12 to 19 (12 to 19 (GPVGAGKT)) interacts with GTP.

This sequence belongs to the SIMIBI class G3E GTPase family. UreG subfamily. Homodimer. UreD, UreF and UreG form a complex that acts as a GTP-hydrolysis-dependent molecular chaperone, activating the urease apoprotein by helping to assemble the nickel containing metallocenter of UreC. The UreE protein probably delivers the nickel.

It is found in the cytoplasm. Functionally, facilitates the functional incorporation of the urease nickel metallocenter. This process requires GTP hydrolysis, probably effectuated by UreG. This Rhodobacter capsulatus (Rhodopseudomonas capsulata) protein is Urease accessory protein UreG.